The following is a 579-amino-acid chain: 2-isopropylmalate synthase (579 aa).

Residues 33–308 (PRWLSTDLRD…DPGIDFSDIN (276 aa)) enclose the Pyruvate carboxyltransferase domain. Residues aspartate 42, histidine 247, histidine 249, and asparagine 283 each coordinate Mg(2+). The interval 450–579 (SSDLPVPLAS…IVAPLVAAGR (130 aa)) is regulatory domain.

The protein belongs to the alpha-IPM synthase/homocitrate synthase family. LeuA type 2 subfamily. In terms of assembly, homodimer. Requires Mg(2+) as cofactor.

It localises to the cytoplasm. It catalyses the reaction 3-methyl-2-oxobutanoate + acetyl-CoA + H2O = (2S)-2-isopropylmalate + CoA + H(+). It participates in amino-acid biosynthesis; L-leucine biosynthesis; L-leucine from 3-methyl-2-oxobutanoate: step 1/4. Catalyzes the condensation of the acetyl group of acetyl-CoA with 3-methyl-2-oxobutanoate (2-ketoisovalerate) to form 3-carboxy-3-hydroxy-4-methylpentanoate (2-isopropylmalate). The polypeptide is 2-isopropylmalate synthase (Streptosporangium roseum (strain ATCC 12428 / DSM 43021 / JCM 3005 / KCTC 9067 / NCIMB 10171 / NRRL 2505 / NI 9100)).